Consider the following 486-residue polypeptide: Protein nucleotidyltransferase YdiU (486 aa).

Residues Gly90, Gly92, Arg93, Lys113, Asp125, Gly126, Arg176, and Arg183 each contribute to the ATP site. Catalysis depends on Asp252, which acts as the Proton acceptor. 2 residues coordinate Mg(2+): Asn253 and Asp262. Residue Asp262 coordinates ATP.

This sequence belongs to the SELO family. Mg(2+) is required as a cofactor. The cofactor is Mn(2+).

The enzyme catalyses L-seryl-[protein] + ATP = 3-O-(5'-adenylyl)-L-seryl-[protein] + diphosphate. It carries out the reaction L-threonyl-[protein] + ATP = 3-O-(5'-adenylyl)-L-threonyl-[protein] + diphosphate. It catalyses the reaction L-tyrosyl-[protein] + ATP = O-(5'-adenylyl)-L-tyrosyl-[protein] + diphosphate. The catalysed reaction is L-histidyl-[protein] + UTP = N(tele)-(5'-uridylyl)-L-histidyl-[protein] + diphosphate. The enzyme catalyses L-seryl-[protein] + UTP = O-(5'-uridylyl)-L-seryl-[protein] + diphosphate. It carries out the reaction L-tyrosyl-[protein] + UTP = O-(5'-uridylyl)-L-tyrosyl-[protein] + diphosphate. Its function is as follows. Nucleotidyltransferase involved in the post-translational modification of proteins. It can catalyze the addition of adenosine monophosphate (AMP) or uridine monophosphate (UMP) to a protein, resulting in modifications known as AMPylation and UMPylation. In Pseudomonas aeruginosa (strain LESB58), this protein is Protein nucleotidyltransferase YdiU.